The chain runs to 159 residues: Small ribosomal subunit protein uS7 (159 aa).

This sequence belongs to the universal ribosomal protein uS7 family. As to quaternary structure, part of the 30S ribosomal subunit. Contacts proteins S9 and S11.

Its function is as follows. One of the primary rRNA binding proteins, it binds directly to 16S rRNA where it nucleates assembly of the head domain of the 30S subunit. Is located at the subunit interface close to the decoding center, probably blocks exit of the E-site tRNA. The protein is Small ribosomal subunit protein uS7 of Wolbachia pipientis wMel.